A 210-amino-acid chain; its full sequence is ATP-dependent Clp protease proteolytic subunit (210 aa).

The Nucleophile role is filled by Ser-106. His-131 is an active-site residue.

The protein belongs to the peptidase S14 family. As to quaternary structure, fourteen ClpP subunits assemble into 2 heptameric rings which stack back to back to give a disk-like structure with a central cavity, resembling the structure of eukaryotic proteasomes.

The protein localises to the cytoplasm. It catalyses the reaction Hydrolysis of proteins to small peptides in the presence of ATP and magnesium. alpha-casein is the usual test substrate. In the absence of ATP, only oligopeptides shorter than five residues are hydrolyzed (such as succinyl-Leu-Tyr-|-NHMec, and Leu-Tyr-Leu-|-Tyr-Trp, in which cleavage of the -Tyr-|-Leu- and -Tyr-|-Trp bonds also occurs).. Its function is as follows. Cleaves peptides in various proteins in a process that requires ATP hydrolysis. Has a chymotrypsin-like activity. Plays a major role in the degradation of misfolded proteins. The polypeptide is ATP-dependent Clp protease proteolytic subunit (Bartonella tribocorum (strain CIP 105476 / IBS 506)).